The sequence spans 371 residues: 4-hydroxy-3-methylbut-2-en-1-yl diphosphate synthase (flavodoxin) (371 aa).

Residues Cys-270, Cys-273, Cys-305, and Glu-312 each coordinate [4Fe-4S] cluster.

It belongs to the IspG family. [4Fe-4S] cluster is required as a cofactor.

The enzyme catalyses (2E)-4-hydroxy-3-methylbut-2-enyl diphosphate + oxidized [flavodoxin] + H2O + 2 H(+) = 2-C-methyl-D-erythritol 2,4-cyclic diphosphate + reduced [flavodoxin]. It participates in isoprenoid biosynthesis; isopentenyl diphosphate biosynthesis via DXP pathway; isopentenyl diphosphate from 1-deoxy-D-xylulose 5-phosphate: step 5/6. Converts 2C-methyl-D-erythritol 2,4-cyclodiphosphate (ME-2,4cPP) into 1-hydroxy-2-methyl-2-(E)-butenyl 4-diphosphate. This Shewanella piezotolerans (strain WP3 / JCM 13877) protein is 4-hydroxy-3-methylbut-2-en-1-yl diphosphate synthase (flavodoxin).